A 132-amino-acid polypeptide reads, in one-letter code: Small ribosomal subunit protein uS8 (132 aa).

It belongs to the universal ribosomal protein uS8 family. In terms of assembly, part of the 30S ribosomal subunit. Contacts proteins S5 and S12.

One of the primary rRNA binding proteins, it binds directly to 16S rRNA central domain where it helps coordinate assembly of the platform of the 30S subunit. This is Small ribosomal subunit protein uS8 from Rickettsia rickettsii (strain Sheila Smith).